The following is a 138-amino-acid chain: MRLSSMWLCSLLLILKLQLSSTYPISTGLTDTDMDILKVLLSRLEESVSEQMAVDQSAPGQRDLLDSLSTEDAGDGPQPDAGLDEAEIREFLSAKNLKSVRNDSSRRSSGCFGRRMDRIGSMSSLGCNTVGRYNPKQR.

A signal peptide spans 1-22 (MRLSSMWLCSLLLILKLQLSST). 2 disordered regions span residues 50–84 (EQMA…AGLD) and 99–138 (SVRN…PKQR). Residues Cys-111 and Cys-127 are joined by a disulfide bond.

It belongs to the natriuretic peptide family.

The protein resides in the secreted. Functionally, cardiac hormone which may function as a paracrine antifibrotic factor in the heart. Also plays a key role in cardiovascular homeostasis through natriuresis, diuresis, vasorelaxation, and inhibition of renin and aldosterone secretion. In Oreochromis mossambicus (Mozambique tilapia), this protein is Brain natriuretic peptide (nppb).